A 638-amino-acid polypeptide reads, in one-letter code: Threonine--tRNA ligase (638 aa).

The TGS domain maps to Met-1–Thr-61. Positions Asp-242–Pro-533 are catalytic. Zn(2+) is bound by residues Cys-333, His-384, and His-510.

Belongs to the class-II aminoacyl-tRNA synthetase family. As to quaternary structure, homodimer. Requires Zn(2+) as cofactor.

Its subcellular location is the cytoplasm. It carries out the reaction tRNA(Thr) + L-threonine + ATP = L-threonyl-tRNA(Thr) + AMP + diphosphate + H(+). Functionally, catalyzes the attachment of threonine to tRNA(Thr) in a two-step reaction: L-threonine is first activated by ATP to form Thr-AMP and then transferred to the acceptor end of tRNA(Thr). Also edits incorrectly charged L-seryl-tRNA(Thr). This chain is Threonine--tRNA ligase, found in Methylococcus capsulatus (strain ATCC 33009 / NCIMB 11132 / Bath).